Consider the following 254-residue polypeptide: Triosephosphate isomerase 2 (254 aa).

9-11 (NMK) is a substrate binding site. The active-site Electrophile is the His-96. The active-site Proton acceptor is Glu-168. Substrate is bound by residues Gly-174 and Ser-212.

It belongs to the triosephosphate isomerase family. In terms of assembly, homodimer.

It is found in the cytoplasm. The catalysed reaction is D-glyceraldehyde 3-phosphate = dihydroxyacetone phosphate. It participates in polyol metabolism; glycerol degradation. Involved in the glycerol metabolism. Catalyzes stereospecifically the conversion of dihydroxyacetone phosphate (DHAP) to D-glyceraldehyde-3-phosphate (G3P). The chain is Triosephosphate isomerase 2 from Listeria innocua serovar 6a (strain ATCC BAA-680 / CLIP 11262).